Consider the following 195-residue polypeptide: Interferon tau-6 (195 aa).

An N-terminal signal peptide occupies residues 1–23; the sequence is MAFVLSLLMALVLVSYGPGGSLG. 2 cysteine pairs are disulfide-bonded: Cys24-Cys122 and Cys52-Cys162. Asn101 carries an N-linked (GlcNAc...) asparagine glycan.

The protein belongs to the alpha/beta interferon family. IFN-alphaII subfamily. In terms of tissue distribution, constitutively and exclusively expressed in the mononuclear cells of the extraembryonic trophectoderm.

The protein localises to the secreted. Its function is as follows. Paracrine hormone primarily responsible for maternal recognition of pregnancy. Interacts with endometrial receptors, probably type I interferon receptors, and blocks estrogen receptor expression, preventing the estrogen-induced increase in oxytocin receptor expression in the endometrium. This results in the suppression of the pulsatile endometrial release of the luteolytic hormone prostaglandin F2-alpha, hindering the regression of the corpus luteum (luteolysis) and therefore a return to ovarian cyclicity. This, and a possible direct effect of IFN-tau on prostaglandin synthesis, leads in turn to continued ovarian progesterone secretion, which stimulates the secretion by the endometrium of the nutrients required for the growth of the conceptus. In summary, displays particularly high antiviral and antiproliferative potency concurrently with particular weak cytotoxicity, high antiluteolytic activity and immunomodulatory properties. In contrast with other IFNs, IFN-tau is not virally inducible. The sequence is that of Interferon tau-6 (IFNT6) from Ovis aries (Sheep).